The following is a 130-amino-acid chain: uncharacterized protein (130 aa).

A disordered region spans residues 48 to 130 (RGYWPQGPPP…LIAAMEEDER (83 aa)). The span at 80–107 (GGDGGGDAGAGPSGVAGTAAGGAGGDGA) shows a compositional bias: gly residues.

This is an uncharacterized protein from Aotus trivirgatus (Three-striped night monkey).